A 59-amino-acid chain; its full sequence is UPF0434 protein VC_1876 (59 aa).

This sequence belongs to the UPF0434 family.

The protein is UPF0434 protein VC_1876 of Vibrio cholerae serotype O1 (strain ATCC 39315 / El Tor Inaba N16961).